The sequence spans 310 residues: Homoserine kinase (310 aa).

91–101 (PIGSGLGSSAC) is an ATP binding site.

This sequence belongs to the GHMP kinase family. Homoserine kinase subfamily.

Its subcellular location is the cytoplasm. It catalyses the reaction L-homoserine + ATP = O-phospho-L-homoserine + ADP + H(+). The protein operates within amino-acid biosynthesis; L-threonine biosynthesis; L-threonine from L-aspartate: step 4/5. Functionally, catalyzes the ATP-dependent phosphorylation of L-homoserine to L-homoserine phosphate. The protein is Homoserine kinase of Escherichia coli (strain SMS-3-5 / SECEC).